The sequence spans 1147 residues: Lon protease homolog 2, peroxisomal (1147 aa).

The Lon N-terminal domain maps to 20 to 348 (LPTYKLDSNL…EVNRMLESMI (329 aa)). Disordered stretches follow at residues 395-444 (KPDK…DDDD) and 561-626 (KIES…SLTT). Acidic residues predominate over residues 427-444 (DGNESNDEYDDDEDDDDD). 2 stretches are compositionally biased toward basic and acidic residues: residues 561–574 (KIES…KKNE) and 582–597 (KNDK…RSDD). 651–658 (GPPGTGKT) lines the ATP pocket. One can recognise a Lon proteolytic domain in the interval 903-1131 (SAKCGVVNGL…WDVIKAVWGD (229 aa)). Catalysis depends on residues Ser-1006 and Lys-1049.

It belongs to the peptidase S16 family.

The protein localises to the peroxisome matrix. The catalysed reaction is Hydrolysis of proteins in presence of ATP.. Its function is as follows. ATP-dependent serine protease that mediates the selective degradation of misfolded and unassembled polypeptides in the peroxisomal matrix. Necessary for type 2 peroxisome targeting signal (PTS2)-containing protein processing and facilitates peroxisome matrix protein import. The polypeptide is Lon protease homolog 2, peroxisomal (Debaryomyces hansenii (strain ATCC 36239 / CBS 767 / BCRC 21394 / JCM 1990 / NBRC 0083 / IGC 2968) (Yeast)).